A 642-amino-acid polypeptide reads, in one-letter code: Poly(A) RNA polymerase protein 1 (642 aa).

Disordered regions lie at residues 1-29 (MTRL…KSSF) and 84-104 (TSSE…LEDN). Over residues 88–100 (DEQRAESSKRNNS) the composition is skewed to basic and acidic residues. 2 residues coordinate Mg(2+): D233 and D235. ATP-binding residues include G298, K323, N428, and R432. The 61-residue stretch at 368 to 428 (NLGVLLIDFF…AIQDPGDPNN (61 aa)) folds into the PAP-associated domain. The interval 535–642 (AKKKQKAKKD…DYWLSKGQAL (108 aa)) is disordered. Residues 578 to 588 (QGSLLHQNNLS) are compositionally biased toward polar residues. A phosphoserine mark is found at S596 and S602. Positions 604–635 (QDQKGRDTPSGQDEKSPLETKTVDAQTRRDYW) are enriched in basic and acidic residues.

This sequence belongs to the DNA polymerase type-B-like family. In terms of assembly, component of the TRAMP5 complex composed of at least AIR1, MTR4 and TFR5. Interacts with POL2, DPB2 and DPB11. The cofactor is Mg(2+). It depends on Mn(2+) as a cofactor.

It localises to the nucleus. Its subcellular location is the nucleolus. It catalyses the reaction RNA(n) + ATP = RNA(n)-3'-adenine ribonucleotide + diphosphate. Catalytic subunit of the TRAMP5 complex which has a poly(A) RNA polymerase activity and is involved in a post-transcriptional quality control mechanism limiting inappropriate expression of genetic information. Polyadenylation is required for the degradative activity of the exosome on several of its nuclear RNA substrates like cryptic transcripts generated by RNA polymerase II and III, or hypomethylated pre-tRNAi-Met. Polyadenylates RNA processing and degradation intermediates of snRNAs, snoRNAs and mRNAs that accumulate in strains lacking a functional exosome. TRF5 is also required for proper nuclear division in mitosis and sister chromatid cohesion. Involved in the regulation of histone mRNA levels. May mediate mitotic chromosome condensation. This is Poly(A) RNA polymerase protein 1 (TRF5) from Saccharomyces cerevisiae (strain ATCC 204508 / S288c) (Baker's yeast).